The sequence spans 271 residues: Histone chaperone asf-1 (271 aa).

A disordered region spans residues 152–271; sequence KWDSEASAPP…PKQQGMAMAQ (120 aa). 2 stretches are compositionally biased toward acidic residues: residues 168–185 and 211–258; these read PEAD…DELA and IEED…EMEI.

It belongs to the ASF1 family. Interacts with histone H3 and histone H4.

It localises to the nucleus. In terms of biological role, histone chaperone that facilitates histone deposition and histone exchange and removal during nucleosome assembly and disassembly. The chain is Histone chaperone asf-1 (asf-1) from Neurospora crassa (strain ATCC 24698 / 74-OR23-1A / CBS 708.71 / DSM 1257 / FGSC 987).